A 512-amino-acid chain; its full sequence is MVSLKACVVAYGFTLLPALVSGSPLVPRYFQKHLVSRCNISAITVQSELGPQLSNTSLIFGPDNVLFPNATERWNTLDTPDVQLVVQPAAESDISKIVKYCNDNSIEFLVRNRGHGTTTSLSAFSGIEINVELLQGITIQPDGETAIFQAGTYGAEVINTLWDQGYVTTTGSTACVGLTGPSLGGGHSRYEGLYGLVMDNIVHYNIVLANGTEIGVNETSHPDLMWALKGAGHNFAIVTSLEKKIYPGENWHQHTYTWTQDKLETVFEALNTFHKSYNGTTPPKMGVNYGAIIMNTSYSTTEAVMEWGFQYAGPGDEAEALLAPFNAIGAIAEDQFDASYPTIAGTTSETCGSAKRAISSAMTLDYNITTERALYDHFVAKVAEYPDLAATAYLWHEGYSTEGYQIIPEDSTAYPHREENHLMVFFTEVPEDSDLLEPALDWAKEAMDLWNGGQPDRLPSTYVNYAQGADYETLESVYGYESWRLERLRSLKAEYDPENRFRYFVPIISDEA.

The first 22 residues, 1 to 22 (MVSLKACVVAYGFTLLPALVSG), serve as a signal peptide directing secretion. Asparagine 39, asparagine 55, asparagine 69, asparagine 210, asparagine 217, asparagine 278, asparagine 295, and asparagine 367 each carry an N-linked (GlcNAc...) asparagine glycan. An FAD-binding PCMH-type domain is found at 77–248 (LDTPDVQLVV…TSLEKKIYPG (172 aa)).

Belongs to the oxygen-dependent FAD-linked oxidoreductase family. The cofactor is FAD.

Its pathway is secondary metabolite biosynthesis. Its function is as follows. FAD-linked oxidoreductase; part of the gene cluster that mediates the biosynthesis of iso-A82775C, a enylepoxycyclohexane and biosynthetic precursor of the chloropestolide anticancer natural products. Within the cluster, the prenyltransferase iacE prenylates siccayne to generate pestalodiol E, using dimethylallyl diphosphate (DMAPP) as cosubstrate. The probable oxidoreductase iacF is then involved in the epoxidation of pestalodiol F to pestalodiol F, which is further converted to pestalofone A by the short-chain dehydrogenase/reductase iacG. Iso-A82775C is subsequently generated from pestalofone A by the short-chain dehydrogenase/reductase iacC. Iso-A82775C is further condensed with maldoxin via a Diels-Alder reaction to produce the anticancer natural products chloropestolides A to E. The sequence is that of FAD-linked oxidoreductase iacH from Pestalotiopsis fici (strain W106-1 / CGMCC3.15140).